The sequence spans 345 residues: Tetraacyldisaccharide 4'-kinase (345 aa).

61 to 68 provides a ligand contact to ATP; it reads TAGGTGKT.

The protein belongs to the LpxK family.

The catalysed reaction is a lipid A disaccharide + ATP = a lipid IVA + ADP + H(+). It participates in glycolipid biosynthesis; lipid IV(A) biosynthesis; lipid IV(A) from (3R)-3-hydroxytetradecanoyl-[acyl-carrier-protein] and UDP-N-acetyl-alpha-D-glucosamine: step 6/6. Functionally, transfers the gamma-phosphate of ATP to the 4'-position of a tetraacyldisaccharide 1-phosphate intermediate (termed DS-1-P) to form tetraacyldisaccharide 1,4'-bis-phosphate (lipid IVA). The sequence is that of Tetraacyldisaccharide 4'-kinase from Xanthomonas axonopodis pv. citri (strain 306).